The following is a 201-amino-acid chain: Large ribosomal subunit protein uL4 (201 aa).

Positions 42–67 are disordered; that stretch reads GNSAQKTRSEVSGGGKKPWNQKGTGR.

This sequence belongs to the universal ribosomal protein uL4 family. In terms of assembly, part of the 50S ribosomal subunit.

One of the primary rRNA binding proteins, this protein initially binds near the 5'-end of the 23S rRNA. It is important during the early stages of 50S assembly. It makes multiple contacts with different domains of the 23S rRNA in the assembled 50S subunit and ribosome. Its function is as follows. Forms part of the polypeptide exit tunnel. This Legionella pneumophila (strain Lens) protein is Large ribosomal subunit protein uL4.